A 319-amino-acid polypeptide reads, in one-letter code: Syntaxin ufe1 (319 aa).

The Cytoplasmic portion of the chain corresponds to 1–297 (MTSRTNEFFG…IKAKSRSSRT (297 aa)). One can recognise a t-SNARE coiled-coil homology domain in the interval 228 to 290 (LQEFEHTMER…SGGNQQLIKA (63 aa)). Residues 298–315 (ARLLFCIFTVMGLLLLSL) traverse the membrane as a helical; Anchor for type IV membrane protein segment. Residues 316–319 (DRIV) lie on the Lumenal side of the membrane.

The protein belongs to the syntaxin family. As to quaternary structure, component of a SNARE complex consisting of ufe1, use1, sec20 and sec22 or ykt6. Interacts with sad1.

The protein resides in the endoplasmic reticulum membrane. Its function is as follows. Syntaxin required for targeting and fusion of Golgi-derived retrograde transport vesicles with the ER. The chain is Syntaxin ufe1 (ufe1) from Schizosaccharomyces pombe (strain 972 / ATCC 24843) (Fission yeast).